The primary structure comprises 2543 residues: Highly reducing polyketide synthase PKS2 (2543 aa).

Residues 4–425 (EPRIAVIGLS…GSNSAILLEG (422 aa)) enclose the Ketosynthase family 3 (KS3) domain. Catalysis depends on for beta-ketoacyl synthase activity residues Cys174, His309, and His349. Positions 573–902 (VFTGQGAQHA…TYLPTLFRGT (330 aa)) are malonyl-CoA:ACP transacylase (MAT) domain. Catalysis depends on Ser662, which acts as the For malonyltransferase activity. The N-terminal hotdog fold stretch occupies residues 969 to 1101 (HPLLGRKISP…GQIEAEMTDM (133 aa)). The PKS/mFAS DH domain maps to 969–1281 (HPLLGRKISP…FRNIGSAEEV (313 aa)). Residues 969 to 1283 (HPLLGRKISP…NIGSAEEVID (315 aa)) form a dehydratase (DH) domain region. The Proton acceptor; for dehydratase activity role is filled by His1001. The segment at 1119-1281 (TGLKEHDINA…FRNIGSAEEV (163 aa)) is C-terminal hotdog fold. The active-site Proton donor; for dehydratase activity is the Asp1188. Residues 1438 to 1631 (SKVLGYLTEY…LPSRYGTDKP (194 aa)) form a methyltransferase (CMet) domain region. The tract at residues 1847–2159 (GSPDTIYFQR…SGEHMGKMVI (313 aa)) is enoylreductase (ER) domain. The tract at residues 2184–2359 (ATYLVAGGTR…YTVSIALPVV (176 aa)) is ketoreductase (KR) domain. Residues 2463–2540 (DPLIGLTEAM…ALATEILSQR (78 aa)) form the Carrier domain. O-(pantetheine 4'-phosphoryl)serine is present on Ser2500.

It participates in secondary metabolite biosynthesis. Highly reducing polyketide synthase; part of the gene cluster that mediates the biosynthesis of phomenoic acid, a long chain aliphatic carboxylic acid that does not appear to be essential for pathogenicity but may play a role in allowing to outcompete other fungi in the environmental niche via its antifungal properties. The polyketide synthase produces the long methylated aliphatic carboxylic acid chain of phomenoic acid. The cluster-specific cytochrome P450 monooxygenase may then hydroxylate the methyl group of carbon 31. The putative dehydrogenase YogA, which has no obvious role in phomenoic acid biosynthesis, may further modify phomenoic acid to produce a compound not identified yet. The polypeptide is Highly reducing polyketide synthase PKS2 (Leptosphaeria maculans (strain JN3 / isolate v23.1.3 / race Av1-4-5-6-7-8) (Blackleg fungus)).